The primary structure comprises 342 residues: tRNA(Ile)-lysidine synthase (342 aa).

An ATP-binding site is contributed by 31–36 (SGGQDS).

Belongs to the tRNA(Ile)-lysidine synthase family.

Its subcellular location is the cytoplasm. It catalyses the reaction cytidine(34) in tRNA(Ile2) + L-lysine + ATP = lysidine(34) in tRNA(Ile2) + AMP + diphosphate + H(+). Ligates lysine onto the cytidine present at position 34 of the AUA codon-specific tRNA(Ile) that contains the anticodon CAU, in an ATP-dependent manner. Cytidine is converted to lysidine, thus changing the amino acid specificity of the tRNA from methionine to isoleucine. This chain is tRNA(Ile)-lysidine synthase, found in Nostoc sp. (strain PCC 7120 / SAG 25.82 / UTEX 2576).